Consider the following 319-residue polypeptide: MQDQRNLLVFSGNANKPLAQSICKELGVRMGKALVTRFSDGEVQVEIEESVRRQEVFVIQPTCAPSAENLMELLVLIDALKRASAASVTAVIPYFGYSRQDRRMRSSRVPITAKVAAKMICAMEADRVLTVDLHADQIQGFFDVPIDNVYASPLLLADIWRAYGTDNLIVVSPDVGGVVRARAVAKRLDDADLAIIDKRRPRANVATVMNIIGDVQGKTCVLVDDLVDTAGTLCAAAAALKQRGALKVVAYITHPVLSGPAVDNINNSQLDELVVTDTIPLSAAARTCPKIRQLSVAELLAETIHRIAFGESVSSLYVD.

ATP-binding positions include 40–42 and 99–100; these read DGE and RQ. Mg(2+) contacts are provided by His134 and Asp174. Lys198 is an active-site residue. Residues Arg200, Asp224, and 228 to 232 each bind D-ribose 5-phosphate; that span reads DTAGT.

It belongs to the ribose-phosphate pyrophosphokinase family. Class I subfamily. In terms of assembly, homohexamer. Mg(2+) is required as a cofactor.

The protein localises to the cytoplasm. The enzyme catalyses D-ribose 5-phosphate + ATP = 5-phospho-alpha-D-ribose 1-diphosphate + AMP + H(+). The protein operates within metabolic intermediate biosynthesis; 5-phospho-alpha-D-ribose 1-diphosphate biosynthesis; 5-phospho-alpha-D-ribose 1-diphosphate from D-ribose 5-phosphate (route I): step 1/1. In terms of biological role, involved in the biosynthesis of the central metabolite phospho-alpha-D-ribosyl-1-pyrophosphate (PRPP) via the transfer of pyrophosphoryl group from ATP to 1-hydroxyl of ribose-5-phosphate (Rib-5-P). This chain is Ribose-phosphate pyrophosphokinase, found in Xanthomonas campestris pv. campestris (strain ATCC 33913 / DSM 3586 / NCPPB 528 / LMG 568 / P 25).